A 108-amino-acid chain; its full sequence is Thioredoxin (108 aa).

Residues 2 to 108 (SDAILYVSDD…QLTAFLDSQL (107 aa)) form the Thioredoxin domain. C33 and C36 are oxidised to a cystine.

This sequence belongs to the thioredoxin family.

Its function is as follows. Component of the thioredoxin-thioredoxin reductase system. Participates in various redox reactions through the reversible oxidation of its active center dithiol to a disulfide and catalyzes dithiol-disulfide exchange reactions. The sequence is that of Thioredoxin (trxA) from Acidithiobacillus ferridurans.